The primary structure comprises 195 residues: ATP-dependent Clp protease proteolytic subunit 2 (195 aa).

Catalysis depends on Ser98, which acts as the Nucleophile. His123 is a catalytic residue.

The protein belongs to the peptidase S14 family. Fourteen ClpP subunits assemble into 2 heptameric rings which stack back to back to give a disk-like structure with a central cavity, resembling the structure of eukaryotic proteasomes.

The protein resides in the cytoplasm. The enzyme catalyses Hydrolysis of proteins to small peptides in the presence of ATP and magnesium. alpha-casein is the usual test substrate. In the absence of ATP, only oligopeptides shorter than five residues are hydrolyzed (such as succinyl-Leu-Tyr-|-NHMec, and Leu-Tyr-Leu-|-Tyr-Trp, in which cleavage of the -Tyr-|-Leu- and -Tyr-|-Trp bonds also occurs).. In terms of biological role, cleaves peptides in various proteins in a process that requires ATP hydrolysis. Has a chymotrypsin-like activity. Plays a major role in the degradation of misfolded proteins. ClpXP2 is involved in the complete degradation of the Site-2 clipped anti-sigma-W factor RsiW. This results in the release of SigW and the transcription activation of the genes under the control of the sigma-W factor. This Shouchella clausii (strain KSM-K16) (Alkalihalobacillus clausii) protein is ATP-dependent Clp protease proteolytic subunit 2.